A 388-amino-acid chain; its full sequence is Pectin acetylesterase 1 (388 aa).

The first 24 residues, 1–24 (MKTLLYWGWSSLAGLILFSILAHG), serve as a signal peptide directing secretion. N-linked (GlcNAc...) asparagine glycosylation is found at Asn30 and Asn33. Active-site charge relay system residues include Ser187 and Asp283. Residue Asn304 is glycosylated (N-linked (GlcNAc...) asparagine). His349 functions as the Charge relay system in the catalytic mechanism.

It belongs to the pectinacetylesterase family.

The protein resides in the secreted. The protein localises to the cell wall. Functionally, hydrolyzes acetyl esters in homogalacturonan regions of pectin. In type I primary cell wall, galacturonic acid residues of pectin can be acetylated at the O-2 and O-3 positions. Decreasing the degree of acetylation of pectin gels in vitro alters their physical properties. In Arabidopsis thaliana (Mouse-ear cress), this protein is Pectin acetylesterase 1.